We begin with the raw amino-acid sequence, 233 residues long: Rano class II histocompatibility antigen, A beta chain (233 aa).

The beta-1 stretch occupies residues 1-80 (DFVYQFKGLC…DTVCRYNYEE (80 aa)). Residues 1-194 (DFVYQFKGLC…RAQSESAQSK (194 aa)) are Extracellular-facing. An N-linked (GlcNAc...) asparagine glycan is attached at N14. The segment at 81 to 184 (TEVPTSLRRL…SLESPVTVEW (104 aa)) is beta-2. One can recognise an Ig-like C1-type domain in the interval 93–181 (PNVAISLSRT…DHASLESPVT (89 aa)). The interval 185 to 194 (RAQSESAQSK) is connecting peptide. Residues 195-215 (MLSGIGGLVLGVIFLGLGLFI) traverse the membrane as a helical segment. Residues 216–233 (RHKRQKGPQGPPPAGLLQ) lie on the Cytoplasmic side of the membrane.

This sequence belongs to the MHC class II family.

It localises to the membrane. In terms of biological role, involved in the presentation of foreign antigens to the immune system. In Rattus norvegicus (Rat), this protein is Rano class II histocompatibility antigen, A beta chain (RT1-B).